Reading from the N-terminus, the 202-residue chain is MRYWYLRLAVFLGALAVPAWWLYQAWIFALGPDPGKTLVDRLGLGALVLLLLTLAMTPLQKLSGWPGWIAVRRQLGLWCFTYVLLHLSAYCVFILGLDWGQLGIELSKRPYIIVGMLGFICLFLLAITSNRFAMRKLGSRWKKLHRLVYLILGLGLLHMLWVVRADLEEWTLYAVVGASLMLLRLPSIARRLPRLRTRPGVS.

6 helical membrane-spanning segments follow: residues 8–28 (LAVFLGALAVPAWWLYQAWIF), 42–62 (LGLGALVLLLLTLAMTPLQKL), 75–95 (LGLWCFTYVLLHLSAYCVFIL), 110–130 (PYIIVGMLGFICLFLLAITSN), 147–167 (LVYLILGLGLLHMLWVVRADL), and 169–189 (EWTLYAVVGASLMLLRLPSIA).

It belongs to the MsrQ family. Heterodimer of a catalytic subunit (MsrP) and a heme-binding subunit (MsrQ). FMN serves as cofactor. Heme b is required as a cofactor.

The protein localises to the cell inner membrane. Its function is as follows. Part of the MsrPQ system that repairs oxidized periplasmic proteins containing methionine sulfoxide residues (Met-O), using respiratory chain electrons. Thus protects these proteins from oxidative-stress damage caused by reactive species of oxygen and chlorine generated by the host defense mechanisms. MsrPQ is essential for the maintenance of envelope integrity under bleach stress, rescuing a wide series of structurally unrelated periplasmic proteins from methionine oxidation. MsrQ provides electrons for reduction to the reductase catalytic subunit MsrP, using the quinone pool of the respiratory chain. The chain is Protein-methionine-sulfoxide reductase heme-binding subunit MsrQ from Pseudomonas aeruginosa (strain LESB58).